The following is a 128-amino-acid chain: UPF0325 protein YaeH (128 aa).

The protein belongs to the UPF0325 family.

This Escherichia coli (strain ATCC 8739 / DSM 1576 / NBRC 3972 / NCIMB 8545 / WDCM 00012 / Crooks) protein is UPF0325 protein YaeH.